The following is a 247-amino-acid chain: MGYLRSSFIFSLLAFVTYTYAATIEVRNNCPYTVWAASTPIGGGRRLNKGQTWVINAPRGTKMARIWGRTGCNFNAAGRGSCQTGDCGGVLQCTGWGKPPNTLAEYALDQFSNLDFWDISLVDGFNIPMTFAPTKPSAGKCHAIHCTANINGECPRALKVPGGCNNPCTTFGGQQYCCTQGPCGPTELSKFFKKRCPDAYSYPQDDPTSTFTCPSGSTNYRVVFCPNGVADPNFPLEMPASTDEVAK.

A signal peptide spans 1 to 21 (MGYLRSSFIFSLLAFVTYTYA). Disulfide bonds link C30–C225, C72–C82, C87–C93, C141–C213, C146–C196, C154–C164, C168–C177, and C178–C183.

Belongs to the thaumatin family.

In Solanum commersonii (Commerson's wild potato), this protein is Osmotin-like protein OSML81.